Here is an 843-residue protein sequence, read N- to C-terminus: Protein P (843 aa).

Residues 1–177 (MPLSYQHFRK…FCGSPYSWEQ (177 aa)) are terminal protein domain (TP). The interval 178-346 (DLQHGRLVFQ…YCLYHIVNLI (169 aa)) is spacer. The segment at 219-250 (RKSRLGPQPAQGQLAGRQQGGSGSIRARVHPS) is disordered. Over residues 223–235 (LGPQPAQGQLAGR) the composition is skewed to low complexity. Positions 347–690 (EDWGPCTEHG…YLNLYPVARQ (344 aa)) are polymerase/reverse transcriptase domain (RT). The Reverse transcriptase domain occupies 357–600 (EHRIRTPRTP…YSLNFMGYVI (244 aa)). Residues Asp-429, Asp-551, and Asp-552 each contribute to the Mg(2+) site.

The protein belongs to the hepadnaviridae P protein family.

The catalysed reaction is DNA(n) + a 2'-deoxyribonucleoside 5'-triphosphate = DNA(n+1) + diphosphate. It catalyses the reaction Endonucleolytic cleavage to 5'-phosphomonoester.. Its activity is regulated as follows. Activated by host HSP70 and HSP40 in vitro to be able to bind the epsilon loop of the pgRNA. Because deletion of the RNase H region renders the protein partly chaperone-independent, the chaperones may be needed indirectly to relieve occlusion of the RNA-binding site by this domain. Inhibited by several reverse-transcriptase inhibitors: Lamivudine, Adefovir and Entecavir. Functionally, multifunctional enzyme that converts the viral RNA genome into dsDNA in viral cytoplasmic capsids. This enzyme displays a DNA polymerase activity that can copy either DNA or RNA templates, and a ribonuclease H (RNase H) activity that cleaves the RNA strand of RNA-DNA heteroduplexes in a partially processive 3'- to 5'-endonucleasic mode. Neo-synthesized pregenomic RNA (pgRNA) are encapsidated together with the P protein, and reverse-transcribed inside the nucleocapsid. Initiation of reverse-transcription occurs first by binding the epsilon loop on the pgRNA genome, and is initiated by protein priming, thereby the 5'-end of (-)DNA is covalently linked to P protein. Partial (+)DNA is synthesized from the (-)DNA template and generates the relaxed circular DNA (RC-DNA) genome. After budding and infection, the RC-DNA migrates in the nucleus, and is converted into a plasmid-like covalently closed circular DNA (cccDNA). The activity of P protein does not seem to be necessary for cccDNA generation, and is presumably released from (+)DNA by host nuclear DNA repair machinery. This chain is Protein P, found in Hepatitis B virus genotype B2 (isolate Vietnam/16091/1992) (HBV-B).